Reading from the N-terminus, the 424-residue chain is Histidine--tRNA ligase (424 aa).

Belongs to the class-II aminoacyl-tRNA synthetase family. In terms of assembly, homodimer.

Its subcellular location is the cytoplasm. It carries out the reaction tRNA(His) + L-histidine + ATP = L-histidyl-tRNA(His) + AMP + diphosphate + H(+). The polypeptide is Histidine--tRNA ligase (Francisella philomiragia subsp. philomiragia (strain ATCC 25017 / CCUG 19701 / FSC 153 / O#319-036)).